Reading from the N-terminus, the 102-residue chain is Large ribosomal subunit protein bL21 (102 aa).

This sequence belongs to the bacterial ribosomal protein bL21 family. In terms of assembly, part of the 50S ribosomal subunit. Contacts protein L20.

This protein binds to 23S rRNA in the presence of protein L20. The sequence is that of Large ribosomal subunit protein bL21 from Sulfurimonas denitrificans (strain ATCC 33889 / DSM 1251) (Thiomicrospira denitrificans (strain ATCC 33889 / DSM 1251)).